We begin with the raw amino-acid sequence, 170 residues long: Glycine cleavage system H protein, mitochondrial (170 aa).

The transit peptide at 1 to 45 (MSLRVVRSVRAVACSLRIALASCPPRPWAPSAAAVRSLRTGSALL) directs the protein to the mitochondrion. The 83-residue stretch at 63-145 (IGTVGISNFA…YEDGWLIKMT (83 aa)) folds into the Lipoyl-binding domain. Lys-104 is modified (N6-lipoyllysine).

It belongs to the GcvH family. The glycine cleavage system is composed of four proteins: P (GLDC), T (GCST), L (DLD) and H (GCSH). Interacts with GLDC. It depends on (R)-lipoate as a cofactor.

The protein localises to the mitochondrion. The glycine cleavage system catalyzes the degradation of glycine. The H protein (GCSH) shuttles the methylamine group of glycine from the P protein (GLDC) to the T protein (GCST). Has a pivotal role in the lipoylation of enzymes involved in cellular energetics such as the mitochondrial dihydrolipoyllysine-residue acetyltransferase component of pyruvate dehydrogenase complex (DLAT), and the mitochondrial dihydrolipoyllysine-residue succinyltransferase component of 2-oxoglutarate dehydrogenase complex (DLST). The sequence is that of Glycine cleavage system H protein, mitochondrial from Rattus norvegicus (Rat).